The primary structure comprises 436 residues: MTDIFEVPSPDNNLLDKAEQLRLASIKTSQTNNNERIRALNLMADSLEKNSKEIIDSNFEDYKKAEIKGISKALLSRLKLSKEKLNLGIEGIRKVGDLSDPLGQIQIKKELSKGLILERKTVPIGVLGVIFESRPDAVMQISSLAIRAGNGVMLKGGSEANFTNQAIVSALKKGLQKSNIDDNAICLLTSRKDSMAMLNLEKFINLIIPRGSNELVKFIQENTGIPVLGHADGICHLYIDDEVNLDIALKVALDSKIQYPAACNAIETLLIHKSIAPAFLKKAIPIFNSNNVKLIGDKKAVKLGVAFEANYEDWQTEYLDLILSIKIVDDLEEGIAHIQKFSSKHTDGIITENISNANKFMSEIDSAGVFHNCSTRFADGFRYGFGAEVGISTQTLPPRGPVGLEGLVTYKYFLRGEGHSVDDFSSGKSIYTHKDL.

It belongs to the gamma-glutamyl phosphate reductase family.

It localises to the cytoplasm. It carries out the reaction L-glutamate 5-semialdehyde + phosphate + NADP(+) = L-glutamyl 5-phosphate + NADPH + H(+). It functions in the pathway amino-acid biosynthesis; L-proline biosynthesis; L-glutamate 5-semialdehyde from L-glutamate: step 2/2. Functionally, catalyzes the NADPH-dependent reduction of L-glutamate 5-phosphate into L-glutamate 5-semialdehyde and phosphate. The product spontaneously undergoes cyclization to form 1-pyrroline-5-carboxylate. This is Gamma-glutamyl phosphate reductase from Prochlorococcus marinus (strain MIT 9515).